Consider the following 430-residue polypeptide: DD-carboxypeptidase/endopeptidase Mpg (430 aa).

Zn(2+)-binding residues include histidine 295, aspartate 299, and histidine 375.

Belongs to the peptidase M23B family. In terms of assembly, monomer. Requires Zn(2+) as cofactor. In terms of processing, likely to be synthesized as a proenzyme. The cleavage of the N-terminal domain is probably required for the activation of the enzyme.

It localises to the cell outer membrane. Its function is as follows. Has both endopeptidase and DD-carboxypeptidase activities. Degrades cell wall peptidoglycan (PG) to allow consummate expression of pili. This Neisseria meningitidis serogroup B (strain ATCC BAA-335 / MC58) protein is DD-carboxypeptidase/endopeptidase Mpg.